Here is a 154-residue protein sequence, read N- to C-terminus: MAARLCCQLDPARDVLCLRPVGAESRGRPVSGPLGSLSSSSPSAVPTDHGAHLSLRGLPVCAFSSAGPCALRFTSARRMETTVNAHQILPKILHKRTLGLSTMSTTDLEAYFKDCLFKDWEELGEEIRLKVFVLGGCRHKLVCAPAPCNFFTSA.

The interval 26–45 (RGRPVSGPLGSLSSSSPSAV) is disordered. Low complexity predominate over residues 31–43 (SGPLGSLSSSSPS). The tract at residues 68 to 117 (PCALRFTSARRMETTVNAHQILPKILHKRTLGLSTMSTTDLEAYFKDCLF) is mitochondrial targeting sequence.

Belongs to the orthohepadnavirus protein X family. As to quaternary structure, may form homodimer. May interact with host CEBPA, CFLAR, CREB1, DDB1, E4F1, HBXIP, HSPD1/HSP60, NFKBIA, POLR2E and SMAD4. Interacts with host SMC5-SMC6 complex and induces its degradation. Interacts with host TRPC4AP; leading to prevent ubiquitination of TRPC4AP. Interacts with host PLSCR1; this interaction promotes ubiquitination and degradation of HBx and impairs HBx-mediated cell proliferation. A fraction may be phosphorylated in insect cells and HepG2 cells, a human hepatoblastoma cell line. Phosphorylated in vitro by host protein kinase C or mitogen-activated protein kinase. N-acetylated in insect cells.

It localises to the host cytoplasm. The protein localises to the host nucleus. It is found in the host mitochondrion. Multifunctional protein that plays a role in silencing host antiviral defenses and promoting viral transcription. Does not seem to be essential for HBV infection. May be directly involved in development of cirrhosis and liver cancer (hepatocellular carcinoma). Most of cytosolic activities involve modulation of cytosolic calcium. The effect on apoptosis is controversial depending on the cell types in which the studies have been conducted. May induce apoptosis by localizing in mitochondria and causing loss of mitochondrial membrane potential. May also modulate apoptosis by binding host CFLAR, a key regulator of the death-inducing signaling complex (DISC). Promotes viral transcription by using the host E3 ubiquitin ligase DDB1 to target the SMC5-SMC6 complex to proteasomal degradation. This host complex would otherwise bind to viral episomal DNA, and prevents its transcription. Moderately stimulates transcription of many different viral and cellular transcription elements. Promoters and enhancers stimulated by HBx contain DNA binding sites for NF-kappa-B, AP-1, AP-2, c-EBP, ATF/CREB, or the calcium-activated factor NF-AT. The polypeptide is Protein X (Hepatitis B virus genotype D subtype ayw (isolate Japan/JYW796/1988) (HBV-D)).